Reading from the N-terminus, the 383-residue chain is MSPEVALNRISPALSPFISSVVRNGKVGLDATNCLRITDLKSGCTSLTPGPSCDRFKLHIPYAGETLKWDIIFNAHYPDLPPDFIFGEDAEFLPDPSALHNLASWNPSNPECLLLVVKELVQQYHQFQCSRLRESSRLMFEYQTLLEEPQYGENMEIYAGKKNNWTGEFSARFLLKLPVDFSNIPTYLLKDVNEDPGEDVALLSVSFEDAEATQVFPKLYLSPRIEHALGGSSALHIPAFPGGGCLIDYVPQVCQLLTNKVQYVIQGYHKRREYIAAFLSHFGTGVVEYDAEGFTKLTLLLMWKDFCFLVHIDLPLYFPRDQPTLTFQSVYHFTNSGQLYSQAQKNYPYSPRWDGNEMAKRAKAYFKTFVPQFQEAAFANGKL.

UEV-like stretches follow at residues 30–147 (DATN…TLLE) and 275–364 (IAAF…RAKA).

The protein belongs to the BABAM2 family. As to quaternary structure, component of the ARISC complex, at least composed of UIMC1/RAP80, ABRAXAS1, BRCC3/BRCC36, BABAM2 and BABAM1/NBA1. Component of the BRCA1-A complex, at least composed of BRCA1, BARD1, UIMC1/RAP80, ABRAXAS1, BRCC3/BRCC36, BABAM2 and BABAM1/NBA1. In the BRCA1-A complex, interacts directly with ABRAXAS1, BRCC3/BRCC36 and BABAM1/NBA1. Binds polyubiquitin. Component of the BRISC complex, at least composed of ABRAXAS2, BRCC3/BRCC36, BABAM2 and BABAM1/NBA1. Identified in a complex with SHMT2 and the other subunits of the BRISC complex. Component of the BRCA1/BRCA2 containing complex (BRCC), which also contains BRCA1, BRCA2, BARD1, BRCC3/BRCC36 and RAD51. BRCC is a ubiquitin E3 ligase complex that enhances cellular survival following DNA damage. May interact with FAS and TNFRSF1A.

Its subcellular location is the cytoplasm. The protein resides in the nucleus. Functionally, component of the BRCA1-A complex, a complex that specifically recognizes 'Lys-63'-linked ubiquitinated histones H2A and H2AX at DNA lesions sites, leading to target the BRCA1-BARD1 heterodimer to sites of DNA damage at double-strand breaks (DSBs). The BRCA1-A complex also possesses deubiquitinase activity that specifically removes 'Lys-63'-linked ubiquitin on histones H2A and H2AX. In the BRCA1-A complex, it acts as an adapter that bridges the interaction between BABAM1/NBA1 and the rest of the complex, thereby being required for the complex integrity and modulating the E3 ubiquitin ligase activity of the BRCA1-BARD1 heterodimer. Component of the BRISC complex, a multiprotein complex that specifically cleaves 'Lys-63'-linked ubiquitin in various substrates. Within the BRISC complex, acts as an adapter that bridges the interaction between BABAM1/NBA1 and the rest of the complex, thereby being required for the complex integrity. The BRISC complex is required for normal mitotic spindle assembly and microtubule attachment to kinetochores via its role in deubiquitinating NUMA1. The BRISC complex plays a role in interferon signaling via its role in the deubiquitination of the interferon receptor IFNAR1; deubiquitination increases IFNAR1 activity by enhancing its stability and cell surface expression. Down-regulates the response to bacterial lipopolysaccharide (LPS) via its role in IFNAR1 deubiquitination. May play a role in homeostasis or cellular differentiation in cells of neural, epithelial and germline origins. May also act as a death receptor-associated anti-apoptotic protein, which inhibits the mitochondrial apoptotic pathway. May regulate TNF-alpha signaling through its interactions with TNFRSF1A; however these effects may be indirect. This Gallus gallus (Chicken) protein is BRISC and BRCA1-A complex member 2 (BABAM2).